The following is a 1401-amino-acid chain: Enhancer of mRNA-decapping protein 4 (1401 aa).

A2 carries the post-translational modification N-acetylalanine. S3 and S6 each carry phosphoserine. Residues 23 to 42 are disordered; sequence DRPAGGPSAESPRPSSAYNG. WD repeat units lie at residues 121–164, 167–206, 217–269, 287–326, 335–385, 389–426, and 432–475; these read QPVA…VISV, SERT…VWRL, ILVH…VWDL, KQGF…FWQI, RCLH…MWCT, TCLQ…LSDV, and YVME…LRHT. N6-acetyllysine is present on K125. The segment at 545 to 565 is disordered; it reads TFGESRPELGSEGLGSAAHGS. Phosphoserine occurs at positions 560, 565, 583, and 585. Disordered regions lie at residues 603-628 and 662-702; these read ASLQ…SSSS and DGSL…QVPT. Positions 609 to 628 are enriched in low complexity; the sequence is TASPSSSSSGSSSSSSSSSS. Residues 663-675 show a composition bias toward polar residues; that stretch reads GSLTMSSSGSLQA. At S676 the chain carries Phosphoserine. Over residues 677-689 the composition is skewed to low complexity; the sequence is PRGLLPGLLPAPA. T693 is subject to Phosphothreonine. Phosphoserine occurs at positions 708, 723, and 725. Disordered stretches follow at residues 717-741 and 778-808; these read LGLP…TALS and LLSP…HNTP. Residues 722–741 show a composition bias toward polar residues; sequence ASPSRTRSPDVISSASTALS. T727 bears the Phosphothreonine mark. A phosphoserine mark is found at S729 and S741. T821 is modified (phosphothreonine). Phosphoserine is present on residues S844, S871, S875, S879, S887, S890, and S892. The interval 868–946 is disordered; that stretch reads QRDSQDASAE…RLTEHQVAEP (79 aa). The tract at residues 913 to 934 is sufficient for nuclear localization; sequence GSPRTSPKLKRKSKKDDGDAAM. Residues 954-1025 adopt a coiled-coil conformation; the sequence is IWQQQRELAE…GGQLQEQLTQ (72 aa). S967 and S1380 each carry phosphoserine.

The protein belongs to the WD repeat EDC4 family. In terms of assembly, part of a decapping complex consisting of DCP1A, DCP2, EDC3, EDC4 and probably DDX6. Part of a complex consisting of DCP1A, EDC3, EDC4 and DDX6. Part of a complex consisting of DCP1B, EDC3, EDC4 and DDX6. Interacts with DCP2. Interacts with RC3H1. Interacts with NBDY. Interacts with TEX19. Interacts with LSM14A. Interacts with DDX6. (Microbial infection) Interacts with rotavirus A non-structural protein 2; this interaction probably plays a role in the sequestration of EDC4 in viral factories. Interacts with rotavirus A non-structural protein 5; this interaction probably plays a role in its sequestration in viral factories.

Its subcellular location is the cytoplasm. It localises to the P-body. It is found in the nucleus. Functionally, in the process of mRNA degradation, seems to play a role in mRNA decapping. Component of a complex containing DCP2 and DCP1A which functions in decapping of ARE-containing mRNAs. Promotes complex formation between DCP1A and DCP2. Enhances the catalytic activity of DCP2 (in vitro). In Homo sapiens (Human), this protein is Enhancer of mRNA-decapping protein 4 (EDC4).